The following is a 506-amino-acid chain: Trans-cinnamate 4-monooxygenase (506 aa).

A helical membrane pass occupies residues 3-23 (DFVLLEKALLGLFIATIVAIT). (E)-cinnamate-binding positions include 214–219 (RSRLAQ) and Ala307. Cys448 lines the heme pocket.

It belongs to the cytochrome P450 family. The cofactor is heme.

The protein resides in the membrane. The catalysed reaction is (E)-cinnamate + reduced [NADPH--hemoprotein reductase] + O2 = (E)-4-coumarate + oxidized [NADPH--hemoprotein reductase] + H2O + H(+). It participates in phenylpropanoid metabolism; trans-4-coumarate biosynthesis; trans-4-coumarate from trans-cinnamate: step 1/1. In terms of biological role, catalyzes the first oxidative step of the phenylpropanoid pathway in higher plants by transforming trans-cinnamate into p-coumarate. The compounds formed by this pathway are essential components for lignification, pollination, and defense against ultraviolet light, predators and pathogens. This Petroselinum crispum (Parsley) protein is Trans-cinnamate 4-monooxygenase (CYP73A10).